Reading from the N-terminus, the 527-residue chain is Transcription factor RBF1 (527 aa).

Disordered regions lie at residues 1–36 (MSSN…IGAS), 258–281 (ANLY…HNEE), 328–365 (HHLL…QQAA), 395–433 (QLSQ…HGLD), and 470–527 (TQGN…SGFL). The DNA-binding element occupies 160–300 (HVRDALTTDE…LRMINPQHNH (141 aa)). The span at 263 to 281 (NEKDQKRKNKPDEPGHNEE) shows a compositional bias: basic and acidic residues. 2 stretches are compositionally biased toward low complexity: residues 332–365 (QQEQ…QQAA) and 395–428 (QLSQ…PQQT).

It belongs to the RBF1 family.

It is found in the nucleus. Its subcellular location is the chromosome. The protein resides in the telomere. Transcriptional activator that binds to the RPG box and to telomeres. Involved in the regulation of the transition between yeast and filamentous forms and plays a role in virulence. Induces expression of HWP1, a major hyphal cell protein and virulence factor. This chain is Transcription factor RBF1 (RBF1), found in Candida albicans (Yeast).